Reading from the N-terminus, the 429-residue chain is D-inositol 3-phosphate glycosyltransferase (429 aa).

1D-myo-inositol 3-phosphate is bound at residue His-20. Residues 26–27 and Gly-34 each bind UDP-N-acetyl-alpha-D-glucosamine; that span reads QP. 1D-myo-inositol 3-phosphate contacts are provided by residues 31–36, Lys-89, Tyr-122, Thr-146, and Arg-166; that span reads DAGGMN. UDP-N-acetyl-alpha-D-glucosamine is bound by residues Arg-240, Lys-245, and Gln-306. 3 residues coordinate Mg(2+): Tyr-315, Arg-316, and Ala-318. UDP-N-acetyl-alpha-D-glucosamine-binding residues include Glu-328 and Glu-336. Thr-342 contacts Mg(2+).

Belongs to the glycosyltransferase group 1 family. MshA subfamily. As to quaternary structure, homodimer.

It catalyses the reaction 1D-myo-inositol 3-phosphate + UDP-N-acetyl-alpha-D-glucosamine = 1D-myo-inositol 2-acetamido-2-deoxy-alpha-D-glucopyranoside 3-phosphate + UDP + H(+). Catalyzes the transfer of a N-acetyl-glucosamine moiety to 1D-myo-inositol 3-phosphate to produce 1D-myo-inositol 2-acetamido-2-deoxy-glucopyranoside 3-phosphate in the mycothiol biosynthesis pathway. The sequence is that of D-inositol 3-phosphate glycosyltransferase from Nocardiopsis dassonvillei (strain ATCC 23218 / DSM 43111 / CIP 107115 / JCM 7437 / KCTC 9190 / NBRC 14626 / NCTC 10488 / NRRL B-5397 / IMRU 509) (Actinomadura dassonvillei).